We begin with the raw amino-acid sequence, 150 residues long: 3-dehydroquinate dehydratase (150 aa).

Catalysis depends on Tyr26, which acts as the Proton acceptor. Substrate contacts are provided by Asn77, His83, and Asp90. The active-site Proton donor is His103. Residues 104–105 (IS) and Arg114 contribute to the substrate site.

Belongs to the type-II 3-dehydroquinase family. In terms of assembly, homododecamer.

It catalyses the reaction 3-dehydroquinate = 3-dehydroshikimate + H2O. It functions in the pathway metabolic intermediate biosynthesis; chorismate biosynthesis; chorismate from D-erythrose 4-phosphate and phosphoenolpyruvate: step 3/7. Functionally, catalyzes a trans-dehydration via an enolate intermediate. This Buchnera aphidicola subsp. Acyrthosiphon pisum (strain 5A) protein is 3-dehydroquinate dehydratase.